The primary structure comprises 375 residues: Succinyl-diaminopimelate desuccinylase (375 aa).

His66 is a binding site for Zn(2+). Asp68 is a catalytic residue. Asp99 contributes to the Zn(2+) binding site. Glu133 (proton acceptor) is an active-site residue. The Zn(2+) site is built by Glu134, Glu162, and His348.

The protein belongs to the peptidase M20A family. DapE subfamily. In terms of assembly, homodimer. It depends on Zn(2+) as a cofactor. Requires Co(2+) as cofactor.

The catalysed reaction is N-succinyl-(2S,6S)-2,6-diaminopimelate + H2O = (2S,6S)-2,6-diaminopimelate + succinate. It functions in the pathway amino-acid biosynthesis; L-lysine biosynthesis via DAP pathway; LL-2,6-diaminopimelate from (S)-tetrahydrodipicolinate (succinylase route): step 3/3. In terms of biological role, catalyzes the hydrolysis of N-succinyl-L,L-diaminopimelic acid (SDAP), forming succinate and LL-2,6-diaminopimelate (DAP), an intermediate involved in the bacterial biosynthesis of lysine and meso-diaminopimelic acid, an essential component of bacterial cell walls. In Salmonella choleraesuis (strain SC-B67), this protein is Succinyl-diaminopimelate desuccinylase.